The primary structure comprises 178 residues: Large ribosomal subunit protein uL6 (178 aa).

It belongs to the universal ribosomal protein uL6 family. As to quaternary structure, part of the 50S ribosomal subunit.

Functionally, this protein binds to the 23S rRNA, and is important in its secondary structure. It is located near the subunit interface in the base of the L7/L12 stalk, and near the tRNA binding site of the peptidyltransferase center. The protein is Large ribosomal subunit protein uL6 of Sulfurovum sp. (strain NBC37-1).